The sequence spans 951 residues: Valine--tRNA ligase (951 aa).

Residues 42–52 (PNVTGSLHMGH) carry the 'HIGH' region motif. The short motif at 554–558 (KMSKS) is the 'KMSKS' region element. K557 is an ATP binding site. Residues 880 to 944 (AGLINKEDEL…AEAKAKLIEQ (65 aa)) adopt a coiled-coil conformation.

It belongs to the class-I aminoacyl-tRNA synthetase family. ValS type 1 subfamily. In terms of assembly, monomer.

The protein resides in the cytoplasm. The catalysed reaction is tRNA(Val) + L-valine + ATP = L-valyl-tRNA(Val) + AMP + diphosphate. Catalyzes the attachment of valine to tRNA(Val). As ValRS can inadvertently accommodate and process structurally similar amino acids such as threonine, to avoid such errors, it has a 'posttransfer' editing activity that hydrolyzes mischarged Thr-tRNA(Val) in a tRNA-dependent manner. The sequence is that of Valine--tRNA ligase from Escherichia coli O6:H1 (strain CFT073 / ATCC 700928 / UPEC).